A 193-amino-acid chain; its full sequence is Pyridoxal 5'-phosphate synthase subunit PdxT (193 aa).

An L-glutamine-binding site is contributed by 50-52; it reads GES. C82 acts as the Nucleophile in catalysis. Residues R109 and 136–137 each bind L-glutamine; that span reads IR. Residues H172 and E174 each act as charge relay system in the active site.

The protein belongs to the glutaminase PdxT/SNO family. In terms of assembly, in the presence of PdxS, forms a dodecamer of heterodimers. Only shows activity in the heterodimer.

The catalysed reaction is aldehydo-D-ribose 5-phosphate + D-glyceraldehyde 3-phosphate + L-glutamine = pyridoxal 5'-phosphate + L-glutamate + phosphate + 3 H2O + H(+). It catalyses the reaction L-glutamine + H2O = L-glutamate + NH4(+). It participates in cofactor biosynthesis; pyridoxal 5'-phosphate biosynthesis. In terms of biological role, catalyzes the hydrolysis of glutamine to glutamate and ammonia as part of the biosynthesis of pyridoxal 5'-phosphate. The resulting ammonia molecule is channeled to the active site of PdxS. This is Pyridoxal 5'-phosphate synthase subunit PdxT from Streptococcus pneumoniae serotype 2 (strain D39 / NCTC 7466).